Here is a 272-residue protein sequence, read N- to C-terminus: MTDLHSLLIAFILGVVEGLTEFLPVSSTGHMIIVGHWLGFVDEKAKTFEVIIQLGSILAVVVMFWRRLFGLIGIHFGKVPHEGKTSGRLKLTHILLAMIPAVVLGLIFHDVIKSLFYPQNVMYSLVIGGFLLLAAEWFKPKEPRAVGLDDITHRQAFMIGCFQCLALWPGFSRSGATISGGMLMGVSRYAASEFSFILAVPMMMGATVLDLYKSWHFLSLADVPMFAVGFVTAFVVALIAIKTFLKIIKRISFIPFAIYRFIVAGVVYMVFM.

The next 7 membrane-spanning stretches (helical) occupy residues 6–26 (SLLI…LPVS), 45–65 (AKTF…VMFW), 92–112 (THIL…HDVI), 115–135 (LFYP…LLAA), 189–209 (YAAS…ATVL), 221–241 (ADVP…LIAI), and 251–271 (ISFI…YMVF).

Belongs to the UppP family.

It localises to the cell inner membrane. The catalysed reaction is di-trans,octa-cis-undecaprenyl diphosphate + H2O = di-trans,octa-cis-undecaprenyl phosphate + phosphate + H(+). In terms of biological role, catalyzes the dephosphorylation of undecaprenyl diphosphate (UPP). Confers resistance to bacitracin. The chain is Undecaprenyl-diphosphatase from Pectobacterium atrosepticum (strain SCRI 1043 / ATCC BAA-672) (Erwinia carotovora subsp. atroseptica).